Reading from the N-terminus, the 975-residue chain is Exocyst complex component 4 (975 aa).

Alanine 2 carries the post-translational modification N-acetylalanine. Lysine 9 bears the N6-acetyllysine mark. Serine 32 is subject to Phosphoserine. The stretch at 32-114 (STSDDVEDRE…HCKRDELRKL (83 aa)) forms a coiled coil. Positions 211–224 (RNKEKGKMSSHGKD) are enriched in basic and acidic residues. Positions 211-230 (RNKEKGKMSSHGKDPSPGPL) are disordered. Serine 226 is subject to Phosphoserine. Threonine 238 is subject to Phosphothreonine. Serine 469 carries the post-translational modification Phosphoserine.

Belongs to the SEC8 family. In terms of assembly, the exocyst complex is composed of EXOC1, EXOC2, EXOC3, EXOC4, EXOC5, EXOC6, EXOC7 and EXOC8. Interacts with BIRC6/bruce. Interacts with MYRIP. Interacts with SH3BP1; required for the localization of both SH3BP1 and the exocyst to the leading edge of migrating cells. Interacts with SLC6A9. Expressed in the striatum (at protein level).

The protein resides in the midbody. It localises to the midbody ring. The protein localises to the cell projection. It is found in the cytoplasm. Its subcellular location is the cytoskeleton. The protein resides in the microtubule organizing center. It localises to the centrosome. Functionally, component of the exocyst complex involved in the docking of exocytic vesicles with fusion sites on the plasma membrane. The chain is Exocyst complex component 4 (Exoc4) from Mus musculus (Mouse).